The sequence spans 215 residues: Probable phosphoglycerate mutase GpmB (215 aa).

Substrate contacts are provided by residues 8–15, 21–22, Arg58, 82–85, 104–105, and 151–152; these read RHGETQWN, QG, ELDM, RR, and GM. His9 serves as the catalytic Tele-phosphohistidine intermediate. Glu82 acts as the Proton donor/acceptor in catalysis.

Belongs to the phosphoglycerate mutase family. GpmB subfamily.

It carries out the reaction (2R)-2-phosphoglycerate = (2R)-3-phosphoglycerate. It participates in carbohydrate degradation; glycolysis; pyruvate from D-glyceraldehyde 3-phosphate: step 3/5. The sequence is that of Probable phosphoglycerate mutase GpmB from Cronobacter sakazakii (strain ATCC BAA-894) (Enterobacter sakazakii).